The sequence spans 227 residues: Guanylate kinase (227 aa).

In terms of domain architecture, Guanylate kinase-like spans 21-199 (GNLFMVVAPS…ALAELECIVA (179 aa)). An ATP-binding site is contributed by 28 to 35 (APSGAGKS).

Belongs to the guanylate kinase family.

It is found in the cytoplasm. The catalysed reaction is GMP + ATP = GDP + ADP. Functionally, essential for recycling GMP and indirectly, cGMP. The sequence is that of Guanylate kinase from Burkholderia orbicola (strain AU 1054).